The following is a 129-amino-acid chain: Small ribosomal subunit protein uS11c (129 aa).

Belongs to the universal ribosomal protein uS11 family. Part of the 30S ribosomal subunit.

The protein resides in the plastid. The protein localises to the chloroplast. The sequence is that of Small ribosomal subunit protein uS11c from Rhodomonas salina (Cryptomonas salina).